The chain runs to 408 residues: Voltage-gated potassium channel subunit beta-1 (408 aa).

Residues T97, W98, Q104, and D126 each contribute to the NADP(+) site. The active-site Proton donor/acceptor is Y131. The NADP(+) site is built by N199, S229, R230, Q255, W284, S285, P286, L287, A288, C289, K295, R305, G364, S366, Q370, E373, and N374.

The protein belongs to the shaker potassium channel beta subunit family. As to quaternary structure, homotetramer. Interaction with tetrameric potassium channel alpha subunits gives rise to a heterooctamer. Identified in potassium channel complexes containing KCNA1, KCNA2, KCNA4, KCNA5, KCNA6, KCNAB1 and KCNAB2. Part of a complex containing KCNA1, KCNA4 and LGI1; interaction with LGI1 inhibits down-regulation of KCNA1 channel activity. Interacts with the dimer formed by GNB1 and GNG2; this enhances KCNA1 binding. Interacts with SQSTM1. As to expression, expression most abundant in aorta. Also high in left ventricle. Also detected in right ventricle, atrium, brain, skeletal muscle and kidney. Not detected in liver.

The protein resides in the cytoplasm. It is found in the membrane. The protein localises to the cell membrane. It carries out the reaction a primary alcohol + NADP(+) = an aldehyde + NADPH + H(+). It catalyses the reaction a secondary alcohol + NADP(+) = a ketone + NADPH + H(+). Regulatory subunit of the voltage-gated potassium (Kv) Shaker channels composed of pore-forming and potassium-conducting alpha subunits and of regulatory beta subunits. The beta-1/KCNAB1 cytoplasmic subunit mediates closure of delayed rectifier potassium channels by physically obstructing the pore via its N-terminal domain and increases the speed of channel closure for other family members. Promotes the inactivation of Kv1.1/KCNA1, Kv1.2/KCNA2, Kv1.4/KCNA4, Kv1.5/KCNA5 and Kv1.6/KCNA6 alpha subunit-containing channels. Displays nicotinamide adenine dinucleotide phosphate (NADPH)-dependent aldoketoreductase activity by catalyzing the NADPH-dependent reduction of a variety of endogenous aldehydes and ketones. The binding of NADPH is required for efficient down-regulation of potassium channel activity. Oxidation of the bound NADPH restrains N-terminal domain from blocking the channel, thereby decreasing N-type inactivation of potassium channel activity. This is Voltage-gated potassium channel subunit beta-1 (KCNAB1) from Mustela putorius (European polecat).